Here is a 90-residue protein sequence, read N- to C-terminus: Caspase recruitment domain-containing protein 18 (90 aa).

Positions 1–90 (MADQLLRKKR…PQLASKMGLH (90 aa)) constitute a CARD domain.

As to quaternary structure, interacts with pro-CASP1. Interacts with CARD8. In terms of tissue distribution, primarily expressed in the heart and placenta.

Inhibits generation of IL-1-beta by interacting with caspase-1 and preventing its association with RIP2. Down-regulates the release of IL1B. In Homo sapiens (Human), this protein is Caspase recruitment domain-containing protein 18 (CARD18).